The primary structure comprises 181 residues: Ribulose bisphosphate carboxylase small subunit, chloroplastic 2 (181 aa).

The transit peptide at 1-57 (MASSVISSAAVATRTNVTQAGSMIAPFTGLKSAATFPVSRKQNLDITSIASNGGRVR) directs the protein to the chloroplast.

The protein belongs to the RuBisCO small chain family. As to quaternary structure, heterohexadecamer of 8 large and 8 small subunits.

The protein resides in the plastid. It localises to the chloroplast. RuBisCO catalyzes two reactions: the carboxylation of D-ribulose 1,5-bisphosphate, the primary event in carbon dioxide fixation, as well as the oxidative fragmentation of the pentose substrate. Both reactions occur simultaneously and in competition at the same active site. Although the small subunit is not catalytic it is essential for maximal activity. The protein is Ribulose bisphosphate carboxylase small subunit, chloroplastic 2 of Solanum tuberosum (Potato).